Consider the following 155-residue polypeptide: F-box only protein 48 (155 aa).

Residues 1–27 (MHKNSKRNNNLRVSHTEANSVDAEKEK) are disordered. The span at 7 to 19 (RNNNLRVSHTEAN) shows a compositional bias: polar residues. An F-box domain is found at 32-79 (NNFFELLPAEITFKIFSQLDIRSLCRASLTCRSWNDTIRNSDSLWKPH).

This is F-box only protein 48 (FBXO48) from Homo sapiens (Human).